A 210-amino-acid chain; its full sequence is Regulator of G-protein signaling 17 (210 aa).

Positions 1–21 are disordered; that stretch reads MRKRQQSQNEGTSAVSQAPGN. The RGS domain occupies 84–200; that stretch reads NFDKMMKTPA…LNSQIYKSLV (117 aa).

As to quaternary structure, interacts with GNAI1 and GNAQ. Interacts with GNAZ and GNAI2. Forms a complex with mu-opioid receptors and G(alpha)z/i2 subunits, including GNAZ and GNAI2; the formation of this complex results in mu-opioid receptor desensitization. In terms of processing, N- and O-glycosylated in synapsomal membranes. Post-translationally, serine phosphorylated in synapsomal membranes. Sumoylated with SUMO1 and SUM02 in synaptosomes. The sumoylated forms act as a scaffold for sequestering mu-opioid receptor-activated G(alpha) subunits.

The protein localises to the membrane. It is found in the synapse. It localises to the synaptosome. Its subcellular location is the nucleus. The protein resides in the cytoplasm. Its function is as follows. Regulates G protein-coupled receptor signaling cascades, including signaling via muscarinic acetylcholine receptor CHRM2 and dopamine receptor DRD2. Inhibits signal transduction by increasing the GTPase activity of G protein alpha subunits, thereby driving them into their inactive GDP-bound form. Binds selectively to GNAZ and GNAI2 subunits, accelerates their GTPase activity and regulates their signaling activities. Negatively regulates mu-opioid receptor-mediated activation of the G-proteins. The chain is Regulator of G-protein signaling 17 (RGS17) from Gallus gallus (Chicken).